A 533-amino-acid chain; its full sequence is Acetone monooxygenase (methyl acetate-forming) (533 aa).

Residues 43 to 46 (TWYW), 55 to 56 (DS), and tyrosine 61 each bind FAD. 53 to 55 (RFD) contributes to the NADP(+) binding site. NADP(+)-binding positions include 183-189 (NGATGIQ), 206-207 (RT), and tryptophan 492.

Belongs to the FAD-binding monooxygenase family. Homotetramer. FAD is required as a cofactor.

It carries out the reaction acetone + NADPH + O2 + H(+) = methyl acetate + NADP(+) + H2O. Functionally, plays an important role in the metabolism of acetone derived from propane oxidation. Catalyzes the oxidation of acetone to methyl acetate. Exhibits high catalytic efficiency towards various linear and cyclic ketones, such as butanone, 2-pentanone, 2-heptanone, 2-octanone, 2-nonanone, 2-decanone, cyclobutanone, cyclopentanone and cyclohexanone. Elicits the highest catalytic efficiency towards butanone and cyclobutanone. Is highly specific for NADPH and cannot use NADH. The chain is Acetone monooxygenase (methyl acetate-forming) from Gordonia sp. (strain TY-5).